Here is a 230-residue protein sequence, read N- to C-terminus: Acyl-protein thioesterase 1 (230 aa).

Catalysis depends on charge relay system residues S119, D174, and H208. An N6-acetyllysine modification is found at K224.

The protein belongs to the AB hydrolase superfamily. AB hydrolase 2 family. In terms of assembly, homodimer.

It is found in the cytoplasm. The protein resides in the cell membrane. The protein localises to the nucleus membrane. Its subcellular location is the endoplasmic reticulum. It carries out the reaction S-hexadecanoyl-L-cysteinyl-[protein] + H2O = L-cysteinyl-[protein] + hexadecanoate + H(+). The catalysed reaction is 1-hexadecanoyl-sn-glycero-3-phosphocholine + H2O = sn-glycerol 3-phosphocholine + hexadecanoate + H(+). It catalyses the reaction a 1-(9Z-octadecenoyl)-2-acyl-sn-glycero-3-phosphocholine + H2O = a 2-acyl-sn-glycero-3-phosphocholine + (9Z)-octadecenoate + H(+). Acts as an acyl-protein thioesterase. Hydrolyzes fatty acids from S-acylated cysteine residues in proteins such as trimeric G alpha proteins or HRAS. Acts as a palmitoyl thioesterase that catalyzes depalmitoylation of proteins, such as ADRB2, KCNMA1 and SQSTM1. Acts as a negative regulator of autophagy by mediating palmitoylation of SQSTM1, decreasing affinity between SQSTM1 and ATG8 proteins and recruitment of ubiquitinated cargo proteins to autophagosomes. Acts as a lysophospholipase and hydrolyzes lysophosphatidylcholine (lyso-PC). Also hydrolyzes lysophosphatidylethanolamine (lyso-PE), lysophosphatidylinositol (lyso-PI) and lysophosphatidylserine (lyso-PS). Has much higher thioesterase activity than lysophospholipase activity. Contributes to the production of lysophosphatidic acid (LPA) during blood coagulation by recognizing and cleaving plasma phospholipids to generate lysophospholipids which in turn act as substrates for ENPP2 to produce LPA. This Mus musculus (Mouse) protein is Acyl-protein thioesterase 1 (Lypla1).